We begin with the raw amino-acid sequence, 182 residues long: Ferredoxin-thioredoxin reductase subunit A1, chloroplastic (182 aa).

A chloroplast-targeting transit peptide spans 1-81 (MSSQIALSPA…VAIKSADSIN (81 aa)).

This sequence belongs to the ferredoxin thioredoxin reductase alpha subunit family. In terms of assembly, heterodimer of subunit A (variable subunit) and subunit B (catalytic subunit). Heterodimeric FTR forms a complex with ferredoxin and thioredoxin.

The protein localises to the plastid. It localises to the chloroplast. Its function is as follows. Variable subunit of the ferredoxin-thioredoxin reductase (FTR), which catalyzes the two-electron reduction of thioredoxins by the electrons provided by reduced ferredoxin. The polypeptide is Ferredoxin-thioredoxin reductase subunit A1, chloroplastic (Arabidopsis thaliana (Mouse-ear cress)).